Here is a 637-residue protein sequence, read N- to C-terminus: MALLSIVSLQVPKSCGLKSLISSSNVQKALCISTAVPTLRMRRRQKALVINMKLTTVSHRDDNGGGVLQRRIADHHPNLWEDDFIQSLSSPYGGSSYSERAVTVVEEVKEMFNSIPNNRELFGSQNDLLTRLWMVDSIERLGIDRHFQNEIRVALDYVYSYWKEKEGIGCGRDSTFPDLNSTALALRTLRLHGYNVSSDVLEYFKDQKGHFACPAILTEGQITRSVLNLYRASLVAFPGEKVMEEAEIFSASYLKEVLQKIPVSSFSREIEYVLEYGWHTNLPRLEARNYIDVYGQDSYESSNEMPYVNTQKLLKLAKLEFNIFHSLQQKELQYISRWWKDSCSSHLTFTRHRHVEYYTMASCISMEPKHSAFRLGFVKTCHLLTVLDDMYDTFGTLDELQLFTTAFKRWDLSETKCLPEYMKAVYMDLYQCLNELAQEAEKTQGRDTLNYIRNAYESHFDSFMHEAKWISSGYLPTFEEYLKNGKVSSGSRTATLQPILTLDVPLPNYILQEIDYPSRFNDLASSLLRLRGDTRCYKADRARGEEASAISCYMKDHPGSTEEDALNHINVMISDAIRELNWELLRPDSKSPISSKKHAFDITRAFHHLYKYRDGYTVASSETKNLVMKTVLEPVAL.

Residues 1–56 (MALLSIVSLQVPKSCGLKSLISSSNVQKALCISTAVPTLRMRRRQKALVINMKLTT) constitute a chloroplast transit peptide. D388, D392, and D540 together coordinate Mg(2+). Residues 388–392 (DDMYD) carry the DDXXD motif motif.

It belongs to the terpene synthase family. Tpsd subfamily. Mg(2+) is required as a cofactor. The cofactor is Mn(2+). It depends on K(+) as a cofactor.

Its subcellular location is the plastid. The protein localises to the chloroplast. The enzyme catalyses (2E)-geranyl diphosphate = (4S)-limonene + diphosphate. It catalyses the reaction (2E)-geranyl diphosphate = (1S,5S)-alpha-pinene + diphosphate. Its pathway is terpene metabolism; oleoresin biosynthesis. Functionally, involved in defensive oleoresin formation in conifers in response to insect attack or other injury. Involved in monoterpene (C10) olefins biosynthesis. This chain is Limonene/alpha-pinene synthase, chloroplastic (ag11), found in Abies grandis (Grand fir).